Here is a 254-residue protein sequence, read N- to C-terminus: 3-oxo-5-alpha-steroid 4-dehydrogenase 2 (254 aa).

A run of 4 helical transmembrane segments spans residues 8–28, 72–92, 146–166, and 206–226; these read SPVL…LYVA, PLSL…LHYF, FSLG…SDYI, and LATW…FLGL.

This sequence belongs to the steroid 5-alpha reductase family. Expressed in high levels in the prostate and many other androgen-sensitive tissues.

It is found in the microsome membrane. Its subcellular location is the endoplasmic reticulum membrane. The enzyme catalyses a 3-oxo-5alpha-steroid + NADP(+) = a 3-oxo-Delta(4)-steroid + NADPH + H(+). It catalyses the reaction 17beta-hydroxy-5alpha-androstan-3-one + NADP(+) = testosterone + NADPH + H(+). The catalysed reaction is 5alpha-pregnane-3,20-dione + NADP(+) = progesterone + NADPH + H(+). Functionally, converts testosterone (T) into 5-alpha-dihydrotestosterone (DHT) and progesterone or corticosterone into their corresponding 5-alpha-3-oxosteroids. It plays a central role in sexual differentiation and androgen physiology. The polypeptide is 3-oxo-5-alpha-steroid 4-dehydrogenase 2 (SRD5A2) (Homo sapiens (Human)).